Reading from the N-terminus, the 122-residue chain is Atrial gland peptide B (122 aa).

An N-terminal signal peptide occupies residues Met-1–Ser-21. Residues Gln-22–Asn-34 constitute a propeptide that is removed on maturation. Residue Ile-69 is modified to Isoleucine amide. The propeptide occupies Ala-73 to Asp-122. The segment at Ala-74–Arg-95 is disordered.

This sequence belongs to the molluscan ELH family.

Its subcellular location is the secreted. Its function is as follows. The atrial gland peptide A and peptide B precursors are the source of the 2 peptides that, upon release from this reproductive system gland, initiate the egg-laying process by exciting the bag cell neurons. These neurons, clustered in neural connectives near the abdominal ganglion, in turn release other peptides that act directly on the ganglion and also, via the circulating hemolymph, on many other organs to control the physiological processes of egg-laying. One of these other peptides is the egg-laying hormone. The sequence is that of Atrial gland peptide B from Aplysia californica (California sea hare).